Consider the following 185-residue polypeptide: Translocon-associated protein subunit gamma (185 aa).

An N-acetylmethionine modification is found at methionine 1. At 1-27 (MAPKGSSKQQSEEDLLLQDFSRNLSAK) the chain is on the lumenal side. 2 positions are modified to phosphoserine: serine 7 and serine 11. A helical membrane pass occupies residues 28–48 (SSALFFGNAFIVSAIPIWLYW). The Cytoplasmic segment spans residues 49–54 (RIWHMD). Residues 55-76 (LIQSAVLYSVMTLVSTYLVAFA) traverse the membrane as a helical segment. Over 77–135 (YKNVKFVLKHKVAQKREDAVSKEVTRKLSEADNRKMSRKEKDERILWKKNEVADYEATT) the chain is Lumenal. Phosphoserine is present on serine 105. The helical transmembrane segment at 136-157 (FSIFYNNTLFLVVVIVASFFIL) threads the bilayer. The Cytoplasmic segment spans residues 158–163 (KNFNPT). A helical transmembrane segment spans residues 164 to 184 (VNYILSISASSGLIALLSTGS).

The protein belongs to the TRAP-gamma family. As to quaternary structure, heterotetramer of TRAP-alpha, TRAP-beta, TRAP-delta and TRAP-gamma.

It localises to the endoplasmic reticulum membrane. Functionally, TRAP proteins are part of a complex whose function is to bind calcium to the ER membrane and thereby regulate the retention of ER resident proteins. In Homo sapiens (Human), this protein is Translocon-associated protein subunit gamma (SSR3).